The following is a 71-amino-acid chain: Calcium dodecin (71 aa).

E18 contacts Ca(2+).

Belongs to the dodecin family. Homododecamer; 12 subunits assemble to form a hollow sphere with a diameter of about 75 Angstroms. Calcium ions are bound at the interface between three subunits.

Functionally, binds calcium ions. May play a role in sequestering additional small ligands. The protein is Calcium dodecin (secE2) of Mycobacterium tuberculosis (strain ATCC 25618 / H37Rv).